The following is a 327-amino-acid chain: Flotillin-like protein FloA (327 aa).

A run of 2 helical transmembrane segments spans residues 8–28 and 29–49; these read VLLI…LVPI and PLWI…LVGM.

The protein belongs to the flotillin-like FloA family. As to quaternary structure, homooligomerizes.

Its subcellular location is the cell membrane. It localises to the membrane raft. Found in functional membrane microdomains (FMM) that may be equivalent to eukaryotic membrane rafts. FMMs are highly dynamic and increase in number as cells age. Flotillins are thought to be important factors in membrane fluidity. This Exiguobacterium sibiricum (strain DSM 17290 / CCUG 55495 / CIP 109462 / JCM 13490 / 255-15) protein is Flotillin-like protein FloA.